Consider the following 327-residue polypeptide: Undecaprenyl-phosphate 4-deoxy-4-formamido-L-arabinose transferase (327 aa).

Residues 1–235 (MFDAAPIKKV…TCLTTTPLRL (235 aa)) are Cytoplasmic-facing. A helical transmembrane segment spans residues 236–256 (LSLLGSVIAIGGFSLSVLLIV). The Periplasmic segment spans residues 257–269 (LRLALGPQWAAEG). A helical membrane pass occupies residues 270-290 (VFMLFAVLFTFIGAQFIGMGL). Topologically, residues 291–327 (LGEYIGRIYNDVRARPRYFVQQVIYPESTPFTEESHQ) are cytoplasmic.

Belongs to the glycosyltransferase 2 family.

It localises to the cell inner membrane. The enzyme catalyses UDP-4-deoxy-4-formamido-beta-L-arabinose + di-trans,octa-cis-undecaprenyl phosphate = 4-deoxy-4-formamido-alpha-L-arabinopyranosyl di-trans,octa-cis-undecaprenyl phosphate + UDP. It participates in glycolipid biosynthesis; 4-amino-4-deoxy-alpha-L-arabinose undecaprenyl phosphate biosynthesis; 4-amino-4-deoxy-alpha-L-arabinose undecaprenyl phosphate from UDP-4-deoxy-4-formamido-beta-L-arabinose and undecaprenyl phosphate: step 1/2. It functions in the pathway bacterial outer membrane biogenesis; lipopolysaccharide biosynthesis. Catalyzes the transfer of 4-deoxy-4-formamido-L-arabinose from UDP to undecaprenyl phosphate. The modified arabinose is attached to lipid A and is required for resistance to polymyxin and cationic antimicrobial peptides. In Salmonella agona (strain SL483), this protein is Undecaprenyl-phosphate 4-deoxy-4-formamido-L-arabinose transferase.